Here is a 120-residue protein sequence, read N- to C-terminus: Large ribosomal subunit protein eL8 (120 aa).

It belongs to the eukaryotic ribosomal protein eL8 family. Part of the 50S ribosomal subunit. Probably part of the RNase P complex.

Its subcellular location is the cytoplasm. Its function is as follows. Multifunctional RNA-binding protein that recognizes the K-turn motif in ribosomal RNA, the RNA component of RNase P, box H/ACA, box C/D and box C'/D' sRNAs. The sequence is that of Large ribosomal subunit protein eL8 from Natronomonas pharaonis (strain ATCC 35678 / DSM 2160 / CIP 103997 / JCM 8858 / NBRC 14720 / NCIMB 2260 / Gabara) (Halobacterium pharaonis).